The chain runs to 329 residues: Diaminopimelate epimerase (329 aa).

Asn14 and Asn73 together coordinate substrate. The active-site Proton donor is Cys82. Residues 83 to 84 (GN), Asn170, Asn206, and 224 to 225 (ER) contribute to the substrate site. The active-site Proton acceptor is the Cys233. A substrate-binding site is contributed by 234-235 (GT).

This sequence belongs to the diaminopimelate epimerase family. As to quaternary structure, homodimer.

The protein resides in the cytoplasm. The catalysed reaction is (2S,6S)-2,6-diaminopimelate = meso-2,6-diaminopimelate. Its pathway is amino-acid biosynthesis; L-lysine biosynthesis via DAP pathway; DL-2,6-diaminopimelate from LL-2,6-diaminopimelate: step 1/1. Catalyzes the stereoinversion of LL-2,6-diaminopimelate (L,L-DAP) to meso-diaminopimelate (meso-DAP), a precursor of L-lysine and an essential component of the bacterial peptidoglycan. The sequence is that of Diaminopimelate epimerase from Listeria monocytogenes serovar 1/2a (strain ATCC BAA-679 / EGD-e).